The following is an 876-amino-acid chain: AP-5 complex subunit beta-1 (876 aa).

Probably part of the adaptor protein complex 5 (AP-5), a tetramer composed of AP5B1, AP5M1, AP5S1 and AP5Z1. Interacts with ZFYVE26 and SPG11.

In terms of biological role, as part of AP-5, a probable fifth adaptor protein complex it may be involved in endosomal transport. The chain is AP-5 complex subunit beta-1 (Ap5b1) from Mus musculus (Mouse).